The following is a 450-amino-acid chain: tRNA-2-methylthio-N(6)-dimethylallyladenosine synthase (450 aa).

The 121-residue stretch at Lys8 to Arg128 folds into the MTTase N-terminal domain. Positions 17, 53, 91, 166, 170, and 173 each coordinate [4Fe-4S] cluster. The Radical SAM core domain occupies Arg152–Ala382. In terms of domain architecture, TRAM spans Ala385–Leu447.

It belongs to the methylthiotransferase family. MiaB subfamily. As to quaternary structure, monomer. The cofactor is [4Fe-4S] cluster.

It localises to the cytoplasm. The enzyme catalyses N(6)-dimethylallyladenosine(37) in tRNA + (sulfur carrier)-SH + AH2 + 2 S-adenosyl-L-methionine = 2-methylsulfanyl-N(6)-dimethylallyladenosine(37) in tRNA + (sulfur carrier)-H + 5'-deoxyadenosine + L-methionine + A + S-adenosyl-L-homocysteine + 2 H(+). Catalyzes the methylthiolation of N6-(dimethylallyl)adenosine (i(6)A), leading to the formation of 2-methylthio-N6-(dimethylallyl)adenosine (ms(2)i(6)A) at position 37 in tRNAs that read codons beginning with uridine. In Phenylobacterium zucineum (strain HLK1), this protein is tRNA-2-methylthio-N(6)-dimethylallyladenosine synthase.